The primary structure comprises 187 residues: ATP synthase subunit delta (187 aa).

Belongs to the ATPase delta chain family. As to quaternary structure, F-type ATPases have 2 components, F(1) - the catalytic core - and F(0) - the membrane proton channel. F(1) has five subunits: alpha(3), beta(3), gamma(1), delta(1), epsilon(1). F(0) has three main subunits: a(1), b(2) and c(10-14). The alpha and beta chains form an alternating ring which encloses part of the gamma chain. F(1) is attached to F(0) by a central stalk formed by the gamma and epsilon chains, while a peripheral stalk is formed by the delta and b chains.

Its subcellular location is the cell inner membrane. In terms of biological role, f(1)F(0) ATP synthase produces ATP from ADP in the presence of a proton or sodium gradient. F-type ATPases consist of two structural domains, F(1) containing the extramembraneous catalytic core and F(0) containing the membrane proton channel, linked together by a central stalk and a peripheral stalk. During catalysis, ATP synthesis in the catalytic domain of F(1) is coupled via a rotary mechanism of the central stalk subunits to proton translocation. Its function is as follows. This protein is part of the stalk that links CF(0) to CF(1). It either transmits conformational changes from CF(0) to CF(1) or is implicated in proton conduction. This Leptospira biflexa serovar Patoc (strain Patoc 1 / Ames) protein is ATP synthase subunit delta.